The chain runs to 291 residues: MQPRRIARELALLGVNQLPATAAKLSEKQLEDLLLAAIRALSEETHETLSTAAAEIQRSDRLLHESDPLLLADSDPKEEGGSRSVTLRLHQAQRHLQRLEITLKEAKVPNPNALRGEVLELIQQVQVALSNAGQALEHLEQRLHSVRHILDEVVQLSQRAVNRVGVALSMPELLYIAQSQEVRAYALQLLTALRTHKEAIDARLQKALVGWQLQRVGRIERDILRLAVVEMEILASSPVKVAINEAVELAKKYGDPEAAAFVNGVLRRVVDSQMETHRGRDPSLPGSGSGG.

This sequence belongs to the NusB family.

Its function is as follows. Involved in transcription antitermination. Required for transcription of ribosomal RNA (rRNA) genes. Binds specifically to the boxA antiterminator sequence of the ribosomal RNA (rrn) operons. The polypeptide is Transcription antitermination protein NusB (Synechococcus sp. (strain JA-2-3B'a(2-13)) (Cyanobacteria bacterium Yellowstone B-Prime)).